The primary structure comprises 417 residues: 26S proteasome regulatory subunit RPN14 (417 aa).

WD repeat units follow at residues 134–173 (AHVS…NPRT), 176–215 (GHRA…TIHT), 242–281 (ISTS…QTIQ), 285–325 (KFTC…CPVG), 330–371 (NEGT…PAIE), and 380–416 (SNDD…NLSN).

This sequence belongs to the WD repeat PAAF1/RPN14 family. In terms of assembly, associates with the 19S proteasome regulatory particle (RP). Interacts directly with RPT5 and RPT6.

It is found in the cytoplasm. The protein resides in the nucleus. Its function is as follows. Acts as a regulatory subunit of the 26 proteasome which is involved in the ATP-dependent degradation of ubiquitinated proteins. Is not a genuine component of the 26S proteasome, but an auxiliary factor that interacts with the proteasomal ATPase of 19S regulatory particle (RP). Acts as a chaperone which regulates the highly structured assembly of the 19S regulatory particle. Involved in the substrate specificity of the 26S proteasome and is especially involved in the degradation of ubiquitinated GCN4. May contribute to the stability of the 26S proteasome in some stress conditions. This Saccharomyces cerevisiae (strain ATCC 204508 / S288c) (Baker's yeast) protein is 26S proteasome regulatory subunit RPN14 (RPN14).